The sequence spans 266 residues: Tryptophan synthase alpha chain (266 aa).

Catalysis depends on proton acceptor residues E49 and D60.

This sequence belongs to the TrpA family. Tetramer of two alpha and two beta chains.

It catalyses the reaction (1S,2R)-1-C-(indol-3-yl)glycerol 3-phosphate + L-serine = D-glyceraldehyde 3-phosphate + L-tryptophan + H2O. It participates in amino-acid biosynthesis; L-tryptophan biosynthesis; L-tryptophan from chorismate: step 5/5. Its function is as follows. The alpha subunit is responsible for the aldol cleavage of indoleglycerol phosphate to indole and glyceraldehyde 3-phosphate. This is Tryptophan synthase alpha chain from Synechococcus elongatus (strain ATCC 33912 / PCC 7942 / FACHB-805) (Anacystis nidulans R2).